The chain runs to 385 residues: 3-hydroxyisobutyryl-CoA hydrolase, mitochondrial (385 aa).

The substrate site is built by Glu-120, Gly-145, Glu-168, and Asp-176.

This sequence belongs to the enoyl-CoA hydratase/isomerase family.

The protein resides in the mitochondrion. The enzyme catalyses 3-hydroxy-2-methylpropanoyl-CoA + H2O = 3-hydroxy-2-methylpropanoate + CoA + H(+). The protein operates within amino-acid degradation; L-valine degradation. Hydrolyzes 3-hydroxyisobutyryl-CoA (HIBYL-CoA), a saline catabolite. Has high activity toward isobutyryl-CoA. Could be an isobutyryl-CoA dehydrogenase that functions in valine catabolism. Also hydrolyzes 3-hydroxypropanoyl-CoA. This chain is 3-hydroxyisobutyryl-CoA hydrolase, mitochondrial (HIBCH), found in Gallus gallus (Chicken).